The chain runs to 251 residues: Probable transcriptional regulatory protein DET0444 (251 aa).

This sequence belongs to the TACO1 family.

The protein localises to the cytoplasm. The sequence is that of Probable transcriptional regulatory protein DET0444 from Dehalococcoides mccartyi (strain ATCC BAA-2266 / KCTC 15142 / 195) (Dehalococcoides ethenogenes (strain 195)).